Consider the following 256-residue polypeptide: Undecaprenyl-diphosphatase (256 aa).

Helical transmembrane passes span 1 to 21 (MTIL…FLPI), 39 to 59 (NAIN…AVIF), 70 to 90 (IDLW…GFIF), 97 to 117 (LFSL…FLIV), 134 to 154 (AISL…LIPG), 176 to 196 (AEFS…YDLL), 205 to 225 (ANLI…YLSI), and 235 to 255 (FTFF…LLFF).

The protein belongs to the UppP family.

Its subcellular location is the cell inner membrane. It carries out the reaction di-trans,octa-cis-undecaprenyl diphosphate + H2O = di-trans,octa-cis-undecaprenyl phosphate + phosphate + H(+). Its function is as follows. Catalyzes the dephosphorylation of undecaprenyl diphosphate (UPP). Confers resistance to bacitracin. This is Undecaprenyl-diphosphatase from Sulfurimonas denitrificans (strain ATCC 33889 / DSM 1251) (Thiomicrospira denitrificans (strain ATCC 33889 / DSM 1251)).